A 449-amino-acid polypeptide reads, in one-letter code: tRNA-2-methylthio-N(6)-dimethylallyladenosine synthase (449 aa).

The MTTase N-terminal domain occupies 7 to 124; it reads DAFYIHTFGC…LPLLIKQVQQ (118 aa). Cysteine 16, cysteine 52, cysteine 87, cysteine 163, cysteine 167, and cysteine 170 together coordinate [4Fe-4S] cluster. A Radical SAM core domain is found at 149–379; the sequence is RSSSMSAFVP…IECQNRISAS (231 aa). The 64-residue stretch at 382–445 folds into the TRAM domain; that stretch reads SQAVGSVVEV…SATLLGEPLI (64 aa).

This sequence belongs to the methylthiotransferase family. MiaB subfamily. Monomer. [4Fe-4S] cluster serves as cofactor.

It is found in the cytoplasm. It carries out the reaction N(6)-dimethylallyladenosine(37) in tRNA + (sulfur carrier)-SH + AH2 + 2 S-adenosyl-L-methionine = 2-methylsulfanyl-N(6)-dimethylallyladenosine(37) in tRNA + (sulfur carrier)-H + 5'-deoxyadenosine + L-methionine + A + S-adenosyl-L-homocysteine + 2 H(+). Its function is as follows. Catalyzes the methylthiolation of N6-(dimethylallyl)adenosine (i(6)A), leading to the formation of 2-methylthio-N6-(dimethylallyl)adenosine (ms(2)i(6)A) at position 37 in tRNAs that read codons beginning with uridine. This is tRNA-2-methylthio-N(6)-dimethylallyladenosine synthase from Chlorobium chlorochromatii (strain CaD3).